Here is a 396-residue protein sequence, read N- to C-terminus: Probable peptidoglycan glycosyltransferase FtsW (396 aa).

9 helical membrane passes run 17 to 37, 61 to 81, 83 to 103, 117 to 137, 159 to 179, 198 to 218, 274 to 294, 316 to 336, and 350 to 370; these read FCDG…WVMV, VFVL…MAWW, ANGP…LVAG, GIPL…VYLA, MVMA…AVVV, FLLL…AEPY, FVFA…VIGL, FAAY…FINI, and LPLL…VGML.

The protein belongs to the SEDS family. FtsW subfamily.

It is found in the cell inner membrane. The enzyme catalyses [GlcNAc-(1-&gt;4)-Mur2Ac(oyl-L-Ala-gamma-D-Glu-L-Lys-D-Ala-D-Ala)](n)-di-trans,octa-cis-undecaprenyl diphosphate + beta-D-GlcNAc-(1-&gt;4)-Mur2Ac(oyl-L-Ala-gamma-D-Glu-L-Lys-D-Ala-D-Ala)-di-trans,octa-cis-undecaprenyl diphosphate = [GlcNAc-(1-&gt;4)-Mur2Ac(oyl-L-Ala-gamma-D-Glu-L-Lys-D-Ala-D-Ala)](n+1)-di-trans,octa-cis-undecaprenyl diphosphate + di-trans,octa-cis-undecaprenyl diphosphate + H(+). The protein operates within cell wall biogenesis; peptidoglycan biosynthesis. Functionally, peptidoglycan polymerase that is essential for cell division. The chain is Probable peptidoglycan glycosyltransferase FtsW from Halomonas elongata (strain ATCC 33173 / DSM 2581 / NBRC 15536 / NCIMB 2198 / 1H9).